The following is an 839-amino-acid chain: Putative AC9 transposase (839 aa).

Positions 32–43 (SSSNANGTATDP) are enriched in polar residues. The tract at residues 32–85 (SSSNANGTATDPSQDDMAIVHEPQPQPQPQPEPQPQPQPEPEEEAPQKRAKKCT) is disordered. The span at 55–70 (QPQPQPQPEPQPQPQP) shows a compositional bias: pro residues.

This chain is Putative AC9 transposase, found in Zea mays (Maize).